A 254-amino-acid chain; its full sequence is Pimeloyl-[acyl-carrier protein] methyl ester esterase (254 aa).

Residues 16-241 (LVLLHGWGMN…QSSHAPFMTE (226 aa)) enclose the AB hydrolase-1 domain. Residues Trp-22, 82-83 (SL), and 143-147 (FMALQ) contribute to the substrate site. Residue Ser-82 is the Nucleophile of the active site. Residues Asp-207 and His-235 contribute to the active site. His-235 provides a ligand contact to substrate.

This sequence belongs to the AB hydrolase superfamily. Carboxylesterase BioH family. As to quaternary structure, monomer.

Its subcellular location is the cytoplasm. The catalysed reaction is 6-carboxyhexanoyl-[ACP] methyl ester + H2O = 6-carboxyhexanoyl-[ACP] + methanol + H(+). The protein operates within cofactor biosynthesis; biotin biosynthesis. Functionally, the physiological role of BioH is to remove the methyl group introduced by BioC when the pimeloyl moiety is complete. It allows to synthesize pimeloyl-ACP via the fatty acid synthetic pathway through the hydrolysis of the ester bonds of pimeloyl-ACP esters. The sequence is that of Pimeloyl-[acyl-carrier protein] methyl ester esterase from Vibrio campbellii (strain ATCC BAA-1116).